Reading from the N-terminus, the 309-residue chain is tRNA dimethylallyltransferase (309 aa).

ATP is bound at residue 9–16 (GPTAVGKT). Position 11 to 16 (11 to 16 (TAVGKT)) interacts with substrate. The interaction with substrate tRNA stretch occupies residues 34 to 37 (DSMQ).

The protein belongs to the IPP transferase family. In terms of assembly, monomer. It depends on Mg(2+) as a cofactor.

The enzyme catalyses adenosine(37) in tRNA + dimethylallyl diphosphate = N(6)-dimethylallyladenosine(37) in tRNA + diphosphate. Its function is as follows. Catalyzes the transfer of a dimethylallyl group onto the adenine at position 37 in tRNAs that read codons beginning with uridine, leading to the formation of N6-(dimethylallyl)adenosine (i(6)A). The protein is tRNA dimethylallyltransferase of Enterococcus faecalis (strain ATCC 700802 / V583).